The chain runs to 343 residues: tRNA N6-adenosine threonylcarbamoyltransferase (343 aa).

Residues His-120 and His-124 each contribute to the Fe cation site. Substrate is bound by residues 142–146, Asp-175, Gly-188, Asp-192, and Asn-281; that span reads VVSGG. Asp-310 is a binding site for Fe cation.

This sequence belongs to the KAE1 / TsaD family. The cofactor is Fe(2+).

The protein localises to the cytoplasm. The catalysed reaction is L-threonylcarbamoyladenylate + adenosine(37) in tRNA = N(6)-L-threonylcarbamoyladenosine(37) in tRNA + AMP + H(+). Required for the formation of a threonylcarbamoyl group on adenosine at position 37 (t(6)A37) in tRNAs that read codons beginning with adenine. Is involved in the transfer of the threonylcarbamoyl moiety of threonylcarbamoyl-AMP (TC-AMP) to the N6 group of A37, together with TsaE and TsaB. TsaD likely plays a direct catalytic role in this reaction. The chain is tRNA N6-adenosine threonylcarbamoyltransferase from Bacillus thuringiensis (strain Al Hakam).